A 179-amino-acid polypeptide reads, in one-letter code: Protein HoxT (179 aa).

This chain is Protein HoxT (hoxT), found in Cupriavidus necator (strain ATCC 17699 / DSM 428 / KCTC 22496 / NCIMB 10442 / H16 / Stanier 337) (Ralstonia eutropha).